We begin with the raw amino-acid sequence, 530 residues long: Pancreatic secretory granule membrane major glycoprotein GP2 (530 aa).

Positions 1-21 are cleaved as a signal peptide; that stretch reads MVACDLLWLAAASCLLTLVFP. An N-linked (GlcNAc...) asparagine glycan is attached at Asn-33. Cystine bridges form between Cys-41/Cys-52, Cys-56/Cys-150, Cys-78/Cys-168, Cys-100/Cys-138, Cys-106/Cys-173, Cys-131/Cys-139, Cys-183/Cys-193, Cys-187/Cys-202, Cys-204/Cys-234, Cys-222/Cys-313, and Cys-254/Cys-277. Residues 54 to 74 are D10C; that stretch reads DPCQNHTVLNDPSRSTENTVS. Residues Asn-58 and Asn-127 are each glycosylated (N-linked (GlcNAc...) asparagine). The EGF-like domain occupies 179 to 223; the sequence is APKKCEIACRPEEECVFQNNSWTCVCRQDLNVSDTLSLQPLLDCG. 2 N-linked (GlcNAc...) asparagine glycosylation sites follow: Asn-197 and Asn-209. The interval 221 to 314 is ZP-N; the sequence is DCGANEIKVK…FLVNVNFQCA (94 aa). Positions 221–477 constitute a ZP domain; sequence DCGANEIKVK…PSCSTSRLRS (257 aa). 2 N-linked (GlcNAc...) asparagine glycosylation sites follow: Asn-284 and Asn-320. Residues 315–338 form a flexible ZP-N/ZP-C linker region; the sequence is YPLDMNVSLQTALQPIVSSLNVDV. An internal hydrophobic patch (IHP) region spans residues 339–350; sequence GGAGEFTVTMAL. The interval 339-477 is ZP-C; that stretch reads GGAGEFTVTM…PSCSTSRLRS (139 aa). Disulfide bonds link Cys-394–Cys-454, Cys-415–Cys-470, and Cys-459–Cys-466. The external hydrophobic patch (EHP) stretch occupies residues 484–492; sequence LTRVLDIGP. A lipid anchor (GPI-anchor amidated asparagine) is attached at Asn-505. The propeptide at 506-530 is removed in mature form; sequence GTPRNTGFLLAWPTFFLPVFLAWLF.

In terms of assembly, interacts with SYCN. Interacts with bacterial adhesin fimH. Post-translationally, N-glycosylated. As to expression, expressed in pancreas.

Its subcellular location is the zymogen granule membrane. It localises to the secreted. The protein resides in the cell membrane. The protein localises to the apical cell membrane. It is found in the membrane raft. Its subcellular location is the endosome. Functions as an intestinal M-cell transcytotic receptor specific of type-I-piliated bacteria that participates in the mucosal immune response toward these bacteria. At the apical membrane of M-cells it binds fimH, a protein of the bacteria type I pilus tip. Internalizes bound bacteria, like E.coli and S.typhimurium, from the lumen of the intestine and delivers them, through M-cells, to the underlying organized lymphoid follicles where they are captured by antigen-presenting dendritic cells to elicit a mucosal immune response. The polypeptide is Pancreatic secretory granule membrane major glycoprotein GP2 (Rattus norvegicus (Rat)).